The primary structure comprises 77 residues: Small ribosomal subunit protein bS20 (77 aa).

Positions 47 to 77 are disordered; sequence ASSSIDKAESKGLIHKNKASRDKARLAAKLG.

Belongs to the bacterial ribosomal protein bS20 family.

Its function is as follows. Binds directly to 16S ribosomal RNA. The polypeptide is Small ribosomal subunit protein bS20 (Streptococcus pyogenes serotype M1).